A 471-amino-acid chain; its full sequence is Chromosomal replication initiator protein DnaA (471 aa).

The interval 1 to 91 is domain I, interacts with DnaA modulators; it reads MVDVSETTER…KYWQDESDAV (91 aa). A domain II region spans residues 91-133; that stretch reads VYSVDICVSDGVGVQPQMAEHPDGAVDGPPVVMVGGTYDHLSS. The interval 134-352 is domain III, AAA+ region; the sequence is PLDPRFTFDN…GALNKVVAHS (219 aa). ATP is bound by residues Gly180, Gly182, Lys183, and Thr184. The tract at residues 353–471 is domain IV, binds dsDNA; sequence SLVGRSVTIE…DINLLIRMLR (119 aa).

The protein belongs to the DnaA family. In terms of assembly, oligomerizes as a right-handed, spiral filament on DNA at oriC.

The protein localises to the cytoplasm. Its function is as follows. Plays an essential role in the initiation and regulation of chromosomal replication. ATP-DnaA binds to the origin of replication (oriC) to initiate formation of the DNA replication initiation complex once per cell cycle. Binds the DnaA box (a 9 base pair repeat at the origin) and separates the double-stranded (ds)DNA. Forms a right-handed helical filament on oriC DNA; dsDNA binds to the exterior of the filament while single-stranded (ss)DNA is stabiized in the filament's interior. The ATP-DnaA-oriC complex binds and stabilizes one strand of the AT-rich DNA unwinding element (DUE), permitting loading of DNA polymerase. After initiation quickly degrades to an ADP-DnaA complex that is not apt for DNA replication. Binds acidic phospholipids. The polypeptide is Chromosomal replication initiator protein DnaA (Anaplasma marginale (strain St. Maries)).